Reading from the N-terminus, the 222-residue chain is Hexitol phosphatase B (222 aa).

The Nucleophile role is filled by D13. The a divalent metal cation site is built by D13 and D15. Substrate contacts are provided by residues 13–15, 115–116, and K148; these read DMD and SA. D15 functions as the Proton donor in the catalytic mechanism. D173 provides a ligand contact to a divalent metal cation.

The protein belongs to the HAD-like hydrolase superfamily. CbbY/CbbZ/Gph/YieH family. Requires Mg(2+) as cofactor. Mn(2+) serves as cofactor. Co(2+) is required as a cofactor. It depends on Zn(2+) as a cofactor.

It carries out the reaction sugar phosphate + H2O = sugar + phosphate.. The enzyme catalyses 2-deoxy-D-glucose 6-phosphate + H2O = 2-deoxy-D-glucose + phosphate. The catalysed reaction is D-mannitol 1-phosphate + H2O = D-mannitol + phosphate. It catalyses the reaction D-sorbitol 6-phosphate + H2O = D-sorbitol + phosphate. In terms of biological role, sugar-phosphate phosphohydrolase that catalyzes the dephosphorylation of D-mannitol 1-phosphate and D-sorbitol 6-phosphate. Also catalyzes the dephosphorylation of 2-deoxyglucose 6-phosphate (2dGlu6P); this is a biologically important activity in vivo since it contributes to the elimination of this toxic compound and plays an important role in the resistance of E.coli to 2-deoxyglucose. The chain is Hexitol phosphatase B from Escherichia coli O157:H7.